Reading from the N-terminus, the 138-residue chain is Small ribosomal subunit protein uS11c (138 aa).

A disordered region spans residues 1–24 (MTKPIPRIGSRRNGRIGSRKSGRR). Basic residues predominate over residues 9–24 (GSRRNGRIGSRKSGRR).

Belongs to the universal ribosomal protein uS11 family. As to quaternary structure, part of the 30S ribosomal subunit.

It is found in the plastid. Its subcellular location is the chloroplast. The protein is Small ribosomal subunit protein uS11c of Liriodendron tulipifera (Tuliptree).